Consider the following 66-residue polypeptide: MPKQKTHRASAKRFKRTGSGGLKRFRAYTSHRFHGKTKKQRRHLRKASMVHSGDYKRIKAMLTRLK.

Basic residues predominate over residues methionine 1–arginine 16. The segment at methionine 1 to glycine 21 is disordered.

The protein belongs to the bacterial ribosomal protein bL35 family.

In Streptococcus pneumoniae serotype 2 (strain D39 / NCTC 7466), this protein is Large ribosomal subunit protein bL35.